The following is a 228-amino-acid chain: 2,3-bisphosphoglycerate-dependent phosphoglycerate mutase (228 aa).

Substrate contacts are provided by residues 8 to 15, 21 to 22, arginine 60, 87 to 90, lysine 98, 114 to 115, and 183 to 184; these read RHGQSEWN, TG, ERHY, RR, and GN. Histidine 9 acts as the Tele-phosphohistidine intermediate in catalysis. The Proton donor/acceptor role is filled by glutamate 87.

Belongs to the phosphoglycerate mutase family. BPG-dependent PGAM subfamily.

The catalysed reaction is (2R)-2-phosphoglycerate = (2R)-3-phosphoglycerate. Its pathway is carbohydrate degradation; glycolysis; pyruvate from D-glyceraldehyde 3-phosphate: step 3/5. Catalyzes the interconversion of 2-phosphoglycerate and 3-phosphoglycerate. The chain is 2,3-bisphosphoglycerate-dependent phosphoglycerate mutase from Staphylococcus epidermidis (strain ATCC 12228 / FDA PCI 1200).